The chain runs to 228 residues: Ribosomal RNA small subunit methyltransferase G (228 aa).

Residues Gly-89, Leu-94, 140-141 (VE), and Arg-159 contribute to the S-adenosyl-L-methionine site.

It belongs to the methyltransferase superfamily. RNA methyltransferase RsmG family.

The protein resides in the cytoplasm. It carries out the reaction guanosine(527) in 16S rRNA + S-adenosyl-L-methionine = N(7)-methylguanosine(527) in 16S rRNA + S-adenosyl-L-homocysteine. In terms of biological role, specifically methylates the N7 position of guanine in position 527 of 16S rRNA. The polypeptide is Ribosomal RNA small subunit methyltransferase G (Burkholderia cenocepacia (strain ATCC BAA-245 / DSM 16553 / LMG 16656 / NCTC 13227 / J2315 / CF5610) (Burkholderia cepacia (strain J2315))).